We begin with the raw amino-acid sequence, 294 residues long: Glycine--tRNA ligase alpha subunit (294 aa).

It belongs to the class-II aminoacyl-tRNA synthetase family. Tetramer of two alpha and two beta subunits.

Its subcellular location is the cytoplasm. The catalysed reaction is tRNA(Gly) + glycine + ATP = glycyl-tRNA(Gly) + AMP + diphosphate. This chain is Glycine--tRNA ligase alpha subunit, found in Sulfurovum sp. (strain NBC37-1).